The chain runs to 180 residues: Large ribosomal subunit protein uL6 (180 aa).

It belongs to the universal ribosomal protein uL6 family. As to quaternary structure, part of the 50S ribosomal subunit.

In terms of biological role, this protein binds to the 23S rRNA, and is important in its secondary structure. It is located near the subunit interface in the base of the L7/L12 stalk, and near the tRNA binding site of the peptidyltransferase center. The polypeptide is Large ribosomal subunit protein uL6 (Borreliella afzelii (strain PKo) (Borrelia afzelii)).